The chain runs to 970 residues: Serine/threonine-protein kinase PLK4 (970 aa).

The 254-residue stretch at 12–265 (FKVGNLLGKG…LSSVLDHPFM (254 aa)) folds into the Protein kinase domain. ATP contacts are provided by residues 18–26 (LGKGSFAGV) and K41. Residues K45 and K46 each carry the N6-acetyllysine modification. D136 functions as the Proton acceptor in the catalytic mechanism. The interval 324 to 373 (VFPKNKSSSDFSSSGDGNSFYTQWGNQETSNSGRGRVIQDAEERPHSRYL) is disordered. Residues 327–343 (KNKSSSDFSSSGDGNSF) show a composition bias toward low complexity. Residues 344 to 356 (YTQWGNQETSNSG) show a composition bias toward polar residues. The span at 360–369 (VIQDAEERPH) shows a compositional bias: basic and acidic residues. The residue at position 401 (S401) is a Phosphoserine. A disordered region spans residues 498–540 (ISPTRDFQGHPDLQKDTSKNAWTDTKVKKNSDASDNAHSVKQP). Residues 504 to 515 (FQGHPDLQKDTS) are compositionally biased toward basic and acidic residues. Over residues 530 to 540 (ASDNAHSVKQP) the composition is skewed to polar residues. Residues 586 to 699 (TLRSITSPLV…SRFVQLVRSK (114 aa)) form the Cryptic POLO box 1 (CPB1) domain. The residue at position 665 (S665) is a Phosphoserine. In terms of domain architecture, Cryptic POLO box 2 (CPB2) spans 700 to 813 (SPKITYFTRY…GRKPGSTSSP (114 aa)). Residues 808-829 (GSTSSPKALSPPPSVDSNYPTR) are disordered. Phosphoserine is present on S817. The POLO box domain maps to 886–964 (QLLKSVFVKN…LSSILLMFSN (79 aa)).

It belongs to the protein kinase superfamily. Ser/Thr protein kinase family. CDC5/Polo subfamily. In terms of assembly, homodimer. Interacts with CEP152 (via N-terminus). Interacts with CEP78; this interaction may be important for proper PLK4 localization to the centriole and PLK4-induced overduplication of centrioles. Interacts with CEP131. Interacts simultaneously with TENT5C and CEP192. Interacts with TENT5C; this interaction leads to the TENT5C recruitment in the centrosome. Interacts with CEP85; this interaction may be important in cell migration and centriole assembly. Ubiquitinated; leading to its degradation by the proteasome. Deubiquitinated by USP54; leading to PLK4 stabilization. In terms of processing, tyrosine-phosphorylated by TEC. Post-translationally, acetylation by KAT2A and KAT2B impairs kinase activity by shifting the kinase to an inactive conformation.

Its subcellular location is the cytoplasm. It localises to the cytoskeleton. It is found in the microtubule organizing center. The protein localises to the centrosome. The protein resides in the centriole. Its subcellular location is the nucleus. It localises to the nucleolus. It is found in the cleavage furrow. It catalyses the reaction L-seryl-[protein] + ATP = O-phospho-L-seryl-[protein] + ADP + H(+). It carries out the reaction L-threonyl-[protein] + ATP = O-phospho-L-threonyl-[protein] + ADP + H(+). Serine/threonine-protein kinase that plays a central role in centriole duplication. Able to trigger procentriole formation on the surface of the parental centriole cylinder, leading to the recruitment of centriole biogenesis proteins such as SASS6, CPAP, CCP110, CEP135 and gamma-tubulin. When overexpressed, it is able to induce centrosome amplification through the simultaneous generation of multiple procentrioles adjoining each parental centriole during S phase. Phosphorylates 'Ser-151' of FBXW5 during the G1/S transition, leading to inhibit FBXW5 ability to ubiquitinate SASS6. Its central role in centriole replication suggests a possible role in tumorigenesis, centrosome aberrations being frequently observed in tumors. Also involved in deuterosome-mediated centriole amplification in multiciliated that can generate more than 100 centrioles. Also involved in trophoblast differentiation by phosphorylating HAND1, leading to disrupt the interaction between HAND1 and MDFIC and activate HAND1. Phosphorylates CDC25C and CHEK2. Required for the recruitment of STIL to the centriole and for STIL-mediated centriole amplification. Phosphorylates CEP131 and PCM1 which is essential for proper organization and integrity of centriolar satellites. The sequence is that of Serine/threonine-protein kinase PLK4 from Pongo abelii (Sumatran orangutan).